Here is a 122-residue protein sequence, read N- to C-terminus: Large ribosomal subunit protein bL20c (122 aa).

This sequence belongs to the bacterial ribosomal protein bL20 family.

The protein localises to the plastid. It localises to the chloroplast. Its function is as follows. Binds directly to 23S ribosomal RNA and is necessary for the in vitro assembly process of the 50S ribosomal subunit. It is not involved in the protein synthesizing functions of that subunit. The chain is Large ribosomal subunit protein bL20c from Dioscorea elephantipes (Elephant's foot yam).